A 109-amino-acid chain; its full sequence is Encapsulin nanocompartment cargo protein EncD (109 aa).

Position 47 (E47) interacts with Fe cation. The interval 61–94 is disordered; it reads AGGRGAAAPTPAREAPAEAPRLARGSADELHEAA. Positions 66-85 are enriched in low complexity; that stretch reads AAAPTPAREAPAEAPRLARG. Residues 100 to 106 are probable targeting peptide; it reads LTVGSLR.

It localises to the encapsulin nanocompartment. In terms of biological role, cargo protein of a type 1 encapsulin nanocompartment. May help nucleate Fe atoms in the interior of the encapsulin nanocompartment. Present in about 47 copies/encapsulin nanocompartment. This chain is Encapsulin nanocompartment cargo protein EncD, found in Myxococcus xanthus (strain DK1622).